Consider the following 130-residue polypeptide: S-adenosylmethionine decarboxylase proenzyme (130 aa).

Catalysis depends on S66, which acts as the Schiff-base intermediate with substrate; via pyruvic acid. The residue at position 66 (S66) is a Pyruvic acid (Ser); by autocatalysis. H71 acts as the Proton acceptor; for processing activity in catalysis. The active-site Proton donor; for catalytic activity is C86.

The protein belongs to the prokaryotic AdoMetDC family. Type 1 subfamily. As to quaternary structure, heterotetramer of two alpha and two beta chains arranged as a dimer of alpha/beta heterodimers. The cofactor is pyruvate. In terms of processing, is synthesized initially as an inactive proenzyme. Formation of the active enzyme involves a self-maturation process in which the active site pyruvoyl group is generated from an internal serine residue via an autocatalytic post-translational modification. Two non-identical subunits are generated from the proenzyme in this reaction, and the pyruvate is formed at the N-terminus of the alpha chain, which is derived from the carboxyl end of the proenzyme. The post-translation cleavage follows an unusual pathway, termed non-hydrolytic serinolysis, in which the side chain hydroxyl group of the serine supplies its oxygen atom to form the C-terminus of the beta chain, while the remainder of the serine residue undergoes an oxidative deamination to produce ammonia and the pyruvoyl group blocking the N-terminus of the alpha chain.

The enzyme catalyses S-adenosyl-L-methionine + H(+) = S-adenosyl 3-(methylsulfanyl)propylamine + CO2. Its pathway is amine and polyamine biosynthesis; S-adenosylmethioninamine biosynthesis; S-adenosylmethioninamine from S-adenosyl-L-methionine: step 1/1. Catalyzes the decarboxylation of S-adenosylmethionine to S-adenosylmethioninamine (dcAdoMet), the propylamine donor required for the synthesis of the polyamines spermine and spermidine from the diamine putrescine. The sequence is that of S-adenosylmethionine decarboxylase proenzyme from Bacillus cereus (strain ATCC 10987 / NRS 248).